A 547-amino-acid chain; its full sequence is Intercellular adhesion molecule 3 (547 aa).

Positions 1–29 (MATMVPSVLWPRACWTLLVCCLLTPGVQG) are cleaved as a signal peptide. Over 30 to 485 (QEFLLRVEPQ…VMDIEAGSSH (456 aa)) the chain is Extracellular. Residues 46–103 (GGSLFVNCSTDCPSSEKIALETSLSKELVASGMGWAAFNLSNVTGNSRILCSVYCNGS) enclose the Ig-like C2-type 1 domain. 6 N-linked (GlcNAc...) asparagine glycosylation sites follow: Asn52, Asn84, Asn87, Asn101, Asn110, and Asn134. 2 disulfide bridges follow: Cys53-Cys96 and Cys57-Cys100. An Ig-like C2-type 2 domain is found at 132–197 (GQNFTLRCQV…FSCRTELDMQ (66 aa)). Cys139 and Cys190 are joined by a disulfide. 9 N-linked (GlcNAc...) asparagine glycosylation sites follow: Asn206, Asn264, Asn295, Asn308, Asn320, Asn363, Asn389, Asn453, and Asn457. Positions 234–301 (ETSWPVDCTL…IVCNVTLGGE (68 aa)) constitute an Ig-like C2-type 3 domain. A disulfide bridge connects residues Cys241 and Cys294. An Ig-like C2-type 4 domain is found at 329–382 (GSTVTVSCMAGARVQVTLDGVPAAAPGQPAQLQLNATESDDRRSFFCSATLEVD). Cys336 and Cys375 are disulfide-bonded. The Ig-like C2-type 5 domain maps to 416–469 (KTTHVLQCQARGNPYPELRCLKEGSSREVPVGIPFFVNVTHNGTYQCQASSSRG). Residues Cys423 and Cys462 are joined by a disulfide bond. Residues 486–510 (FVPVFVAVLLTLGVVTIVLALMYVF) form a helical membrane-spanning segment. At 511-547 (REHKRSGSYHVREESTYLPLTSMQPTQAMGEEPSRAE) the chain is on the cytoplasmic side.

The protein belongs to the immunoglobulin superfamily. ICAM family. In terms of assembly, interacts with moesin/MSN. In terms of processing, upon stimulation by a physiologic stimuli becomes rapidly and transiently phosphorylated on serine residues. Leukocytes.

The protein localises to the membrane. Functionally, ICAM proteins are ligands for the leukocyte adhesion protein LFA-1 (integrin alpha-L/beta-2). ICAM3 is also a ligand for integrin alpha-D/beta-2. In association with integrin alpha-L/beta-2, contributes to apoptotic neutrophil phagocytosis by macrophages. The chain is Intercellular adhesion molecule 3 (ICAM3) from Pan troglodytes (Chimpanzee).